A 380-amino-acid polypeptide reads, in one-letter code: 4-hydroxy-3-methylbut-2-en-1-yl diphosphate synthase (flavodoxin) (380 aa).

[4Fe-4S] cluster-binding residues include Cys-273, Cys-276, Cys-308, and Glu-315.

This sequence belongs to the IspG family. The cofactor is [4Fe-4S] cluster.

The catalysed reaction is (2E)-4-hydroxy-3-methylbut-2-enyl diphosphate + oxidized [flavodoxin] + H2O + 2 H(+) = 2-C-methyl-D-erythritol 2,4-cyclic diphosphate + reduced [flavodoxin]. It participates in isoprenoid biosynthesis; isopentenyl diphosphate biosynthesis via DXP pathway; isopentenyl diphosphate from 1-deoxy-D-xylulose 5-phosphate: step 5/6. Converts 2C-methyl-D-erythritol 2,4-cyclodiphosphate (ME-2,4cPP) into 1-hydroxy-2-methyl-2-(E)-butenyl 4-diphosphate. In Leifsonia xyli subsp. xyli (strain CTCB07), this protein is 4-hydroxy-3-methylbut-2-en-1-yl diphosphate synthase (flavodoxin).